Reading from the N-terminus, the 309-residue chain is tRNA dimethylallyltransferase (309 aa).

An ATP-binding site is contributed by 10–17 (GPTASGKT). A substrate-binding site is contributed by 12–17 (TASGKT). 2 interaction with substrate tRNA regions span residues 35-38 (DSAL) and 240-245 (RCVGYR).

Belongs to the IPP transferase family. As to quaternary structure, monomer. The cofactor is Mg(2+).

The catalysed reaction is adenosine(37) in tRNA + dimethylallyl diphosphate = N(6)-dimethylallyladenosine(37) in tRNA + diphosphate. Functionally, catalyzes the transfer of a dimethylallyl group onto the adenine at position 37 in tRNAs that read codons beginning with uridine, leading to the formation of N6-(dimethylallyl)adenosine (i(6)A). The chain is tRNA dimethylallyltransferase from Baumannia cicadellinicola subsp. Homalodisca coagulata.